The sequence spans 354 residues: S-adenosylmethionine:tRNA ribosyltransferase-isomerase (354 aa).

The protein belongs to the QueA family. As to quaternary structure, monomer.

Its subcellular location is the cytoplasm. It catalyses the reaction 7-aminomethyl-7-carbaguanosine(34) in tRNA + S-adenosyl-L-methionine = epoxyqueuosine(34) in tRNA + adenine + L-methionine + 2 H(+). Its pathway is tRNA modification; tRNA-queuosine biosynthesis. Functionally, transfers and isomerizes the ribose moiety from AdoMet to the 7-aminomethyl group of 7-deazaguanine (preQ1-tRNA) to give epoxyqueuosine (oQ-tRNA). In Salmonella typhi, this protein is S-adenosylmethionine:tRNA ribosyltransferase-isomerase.